A 369-amino-acid polypeptide reads, in one-letter code: Protein RIC-3 (369 aa).

The first 28 residues, 1–28, serve as a signal peptide directing secretion; the sequence is MAYSTVQRVALASGLVLALSLLLPKAFL. Residues 29 to 95 are Lumenal-facing; that stretch reads SRGKRQEPPP…AGGGGSGRGL (67 aa). Residues 30-67 are disordered; the sequence is RGKRQEPPPTPEGKLGRFPPMMHHHQAPSDGQTPGARF. The helical transmembrane segment at 96–116 threads the bilayer; sequence MGQIIPIYGFGIFLYILYILF. The Cytoplasmic portion of the chain corresponds to 117–369; it reads KLSKGKTTAE…LRKRNPQGLE (253 aa). Residues 140-169 are a coiled coil; it reads RKITSFELAQLQEKLKETEAAMEKLINRVG. Lys202 carries the N6-acetyllysine; alternate modification. Lys202 is covalently cross-linked (Glycyl lysine isopeptide (Lys-Gly) (interchain with G-Cter in ubiquitin); alternate). 2 disordered regions span residues 272–295 and 316–369; these read ESDH…SVTS and LAEN…QGLE. Residues 332–346 are compositionally biased toward basic and acidic residues; the sequence is ETTKEEWSQDFKDEG. Residues 360–369 show a composition bias toward basic residues; the sequence is LRKRNPQGLE.

Belongs to the ric-3 family. As to quaternary structure, monomer and homodimer. Interacts with CHRNA7, CHRNA3, CHRNA4, CHRNB2, CHRNB4 and HTR3A. In terms of tissue distribution, broadly expressed, with high levels in muscle, brain, heart, pancreas and testis. In the central nervous system, highest levels are detected in the cerebellum and pituitary gland. Over-expressed in brains from patients with bipolar disease or schizophrenia. Isoform 5 is predominantly expressed in the brain.

Its subcellular location is the endoplasmic reticulum membrane. It localises to the golgi apparatus membrane. Its function is as follows. Molecular chaperone which facilitates proper subunit assembly and surface trafficking of alpha-7 (CHRNA7) and alpha-8 (CHRNA8) nicotinic acetylcholine receptors. May also promote functional expression of homomeric serotoninergic 5-HT3 receptors, and of heteromeric acetylcholine receptors alpha-3/beta-2, alpha-3/beta-4, alpha-4/beta-2 and alpha-4/beta-4. The polypeptide is Protein RIC-3 (RIC3) (Homo sapiens (Human)).